Here is a 113-residue protein sequence, read N- to C-terminus: MMSLAHSKFSCQRTRLLAVVLLAALWSSSLQQAAARVINDDCPNLIGNRDLYKKVEWICDDCANIYRSTGMASLCRKDCFFNEDFLWCVRATERSEDLAQLKQWVTILGAGRI.

The N-terminal stretch at 1–35 is a signal peptide; it reads MMSLAHSKFSCQRTRLLAVVLLAALWSSSLQQAAA. Cystine bridges form between cysteine 42–cysteine 79, cysteine 59–cysteine 75, and cysteine 62–cysteine 88.

It belongs to the arthropod CHH/MIH/GIH/VIH hormone family.

It localises to the secreted. Functionally, inhibits Y-organs where molting hormone (ecdysteroid) is secreted. A molting cycle is initiated when MIH secretion diminishes or stops. In Callinectes sapidus (Blue crab), this protein is Molt-inhibiting hormone.